A 505-amino-acid chain; its full sequence is Methylmalonyl-CoA carboxyltransferase 5S subunit (505 aa).

Residues Val14–His276 enclose the Pyruvate carboxyltransferase domain. Substrate is bound by residues Arg22–Gln26, Ala59, and Lys184. A Co(2+)-binding site is contributed by Asp23. Co(2+) contacts are provided by Lys184, His215, and His217. N6-carboxylysine; partial is present on Lys184.

As to quaternary structure, homodimer. Transcarboxylase is composed of three subunits: 1.3S, 5S, and 12S. The core of the enzyme is composed of six 12S subunits. On each side of the core there are three pairs of 5S subunits. Each 5S dimer is attached to the core by two 1.3S subunits. Thus the total number of chains is 30 (6 + 12 + 12). Requires Co(2+) as cofactor. In terms of processing, lys-184 is carboxylated in the free enzyme and helps to coordinate the cobalt ion. Lys-184 is partially carboxylated in the complex with pyruvate, but is not carboxylated in the oxaloacetate-bound form.

It catalyses the reaction (S)-methylmalonyl-CoA + pyruvate = propanoyl-CoA + oxaloacetate. Functionally, the 5S subunit specifically catalyzes the transfer of the carboxyl group from biotin of the 1.3S subunit to pyruvate to form oxaloacetate and 1.3S biotin. This chain is Methylmalonyl-CoA carboxyltransferase 5S subunit, found in Propionibacterium freudenreichii subsp. shermanii.